The chain runs to 282 residues: Bis(5'-nucleosyl)-tetraphosphatase, symmetrical (282 aa).

It belongs to the Ap4A hydrolase family.

It catalyses the reaction P(1),P(4)-bis(5'-adenosyl) tetraphosphate + H2O = 2 ADP + 2 H(+). In terms of biological role, hydrolyzes diadenosine 5',5'''-P1,P4-tetraphosphate to yield ADP. The chain is Bis(5'-nucleosyl)-tetraphosphatase, symmetrical from Salmonella paratyphi C (strain RKS4594).